Here is a 99-residue protein sequence, read N- to C-terminus: A-type ATP synthase subunit F (99 aa).

It belongs to the V-ATPase F subunit family. As to quaternary structure, has multiple subunits with at least A(3), B(3), C, D, E, F, H, I and proteolipid K(x).

It localises to the cell membrane. Its function is as follows. Component of the A-type ATP synthase that produces ATP from ADP in the presence of a proton gradient across the membrane. The sequence is that of A-type ATP synthase subunit F from Methanococcoides burtonii (strain DSM 6242 / NBRC 107633 / OCM 468 / ACE-M).